The sequence spans 396 residues: Phosphoglycerate kinase (396 aa).

Substrate is bound by residues 21–23 (DFN), Arg-36, 59–62 (HLGK), Arg-119, and Arg-156. ATP-binding positions include Lys-206, Gly-294, Glu-325, and 352-355 (GGDS).

Belongs to the phosphoglycerate kinase family. As to quaternary structure, monomer.

The protein resides in the cytoplasm. The catalysed reaction is (2R)-3-phosphoglycerate + ATP = (2R)-3-phospho-glyceroyl phosphate + ADP. Its pathway is carbohydrate degradation; glycolysis; pyruvate from D-glyceraldehyde 3-phosphate: step 2/5. This chain is Phosphoglycerate kinase, found in Staphylococcus aureus (strain USA300).